Here is a 650-residue protein sequence, read N- to C-terminus: Chaperone protein HtpG (650 aa).

An a; substrate-binding region spans residues 1–349 (MSKTVKKFET…SSDLPLNVSR (349 aa)). The interval 350–566 (EILQEDVQIK…EHGLNANMER (217 aa)) is b. The segment at 567–650 (ILRAMNQTVP…VADGKAAAGE (84 aa)) is c.

This sequence belongs to the heat shock protein 90 family. As to quaternary structure, homodimer.

The protein resides in the cytoplasm. Its function is as follows. Molecular chaperone. Has ATPase activity. In Geobacter sulfurreducens (strain ATCC 51573 / DSM 12127 / PCA), this protein is Chaperone protein HtpG.